Reading from the N-terminus, the 298-residue chain is Small ribosomal subunit protein uS3m (298 aa).

This sequence belongs to the universal ribosomal protein uS3 family.

It localises to the mitochondrion. The chain is Small ribosomal subunit protein uS3m (RPS3) from Acanthamoeba castellanii (Amoeba).